The chain runs to 429 residues: MSGATTASSGDHNNLRLPTPTLDAESQTLLQSISAEGGYAYARMAVLAVAGDQSAAEAARDMAWEQLHSGPWHSVLPVWRDAYSMACLHVAKIHFAAGEFGEALGALDMGLIMGGMLLRKDLHDSVLLVSSEARKMTKSLEEASGDFKGERLVPEVPVDVNEVRHVLANLQLLVLKILPCRSLTCKRVEKRSGLSLEGFLRDYYLPGTPVVITNSMAHWPARTKWNHLDYLNAVAGNRTVPVEVGKNYLCSDWKQELVTFSKFLERMRTNKSSPMEPTYLAQHPLFDQINELRDDICIPDYCFVGGGELQSLNAWFGPAGTVTPLHHDPHHNILAQVVGKKYIRLYPSFLQDELYPYSETMLCNSSQVDLDNIDETEFPKAMELEFMDCILEEGEMLYIPPKWWHYVRSLTMSLSVSFWWSNEAESSSS.

Residues 272–429 form the JmjC domain; sequence SSPMEPTYLA…WSNEAESSSS (158 aa). Fe cation is bound by residues His326, Asp328, and His405.

This sequence belongs to the JARID1 histone demethylase family. In terms of assembly, interacts with EFM. Binds to ATXR2, ARF7 and ARF19. Requires Fe(2+) as cofactor. As to expression, expressed ubiquitously in vasculatures, roots, rosette leaves, stems, inflorescences and siliques. Mainly present in the root meristem and root differentiation area. Observed at high level in callus.

It is found in the nucleus. It localises to the cytoplasm. Its subcellular location is the endoplasmic reticulum. The enzyme catalyses N(6),N(6),N(6)-trimethyl-L-lysyl(36)-[histone H3] + 2 2-oxoglutarate + 2 O2 = N(6)-methyl-L-lysyl(36)-[histone H3] + 2 formaldehyde + 2 succinate + 2 CO2. It carries out the reaction N(6),N(6),N(6)-trimethyl-L-lysyl(27)-[histone H3] + 2 2-oxoglutarate + 2 O2 = N(6)-methyl-L-lysyl(27)-[histone H3] + 2 formaldehyde + 2 succinate + 2 CO2. It catalyses the reaction N(6),N(6)-dimethyl-L-lysyl(36)-[histone H3] + 2 2-oxoglutarate + 2 O2 = L-lysyl(36)-[histone H3] + 2 formaldehyde + 2 succinate + 2 CO2. Histone demethylase that demethylates 'Lys-36' (H3K36me) of histone H3 with a specific activity for H3K36me3 and H3K36me2. Also active on 'Lys-27' (H3K27me) of histone H3 with a specific activity for H3K27me3 and H3K27me2. No activity on H3K36me1 and H3K27me1. Involved in the control of flowering time by demethylating H3K36me2 at the FT locus and repressing its expression. Acts within the central clock and contributes, in parallel with LUX, to temperature compensation, probably as a component of the evening complex, to maintain circadian period at increasing temperatures; this mechanism involves binding to and regulation of CCA1 and PRR7 promoters. Works in concert with TOC1 to promote the morning-phased clock genes CCA1 and LHY which function as components of the central oscillator. Together with JMJ32, regulates the flowering-repressor FLOWERING LOCUS C (FLC) locus by removing the repressive histone modification H3 lysine 27 trimethylation (H3K27me3), especially at elevated temperatures (e.g. 29 degrees Celsius), thus preventing extreme precocious flowering. JMJ30 and JMJ32 are regulators involved in the integration of abscisic acid (ABA) and brassinosteroids (BR) signaling pathways. Together with JMJ32, controls ABA-mediated growth arrest during the post-germination stage in unfavorable conditions, and responses to ABA during root development, via the removal of repressive histone mark (H3K27me3) from the SnRK2.8 promoter, thus promoting SnRK2.8 expression and subsequent kinase-dependent ABI3 activation. In addition, removes the repressive histone marks (H3K27me3) from the BZR1 locus in response to stress and ABA, thus activating the BR signaling pathway which, in turn, inhibits the ABA signaling pathway. Able to drive tissue identity changes to promote callus formation form somatic cells via a massive genome-wide chromatin remodeling (e.g. H3K9me3 demethylation) leading to the induction of Lateral organ Boundaries-Domain (LBD) genes (e.g. LBD16 and LBD29) that establish root primordia; when in complex with ARF proteins (e.g. ARF7 and ARF19), recruits ATXR2 which promotes the deposition of H3K36me3 at LBD genes promoters, thus ensuring their stable activation during callus formation. This chain is Lysine-specific demethylase JMJ30, found in Arabidopsis thaliana (Mouse-ear cress).